Consider the following 896-residue polypeptide: Trehalose-phosphatase (896 aa).

The tract at residues 1-554 (MTTTAQDNSP…SNDDMERKMT (554 aa)) is glycosyltransferase.

The protein in the N-terminal section; belongs to the glycosyltransferase 20 family. This sequence in the C-terminal section; belongs to the trehalose phosphatase family. In terms of assembly, the trehalose synthase complex is composed of the two catalytic subunits TPS1 and TPS2, and at least one of the two regulatory subunits TPS3 or TSL1. Mg(2+) serves as cofactor.

It localises to the cytoplasm. The catalysed reaction is alpha,alpha-trehalose 6-phosphate + H2O = alpha,alpha-trehalose + phosphate. It participates in carbohydrate biosynthesis. Its activity is regulated as follows. Inhibited by EDTA. Phosphatase catalytic subunit of the trehalose synthase complex that catalyzes the production of trehalose from glucose-6-phosphate and UDP-alpha-D-glucose in a two step process. In Saccharomyces cerevisiae (strain ATCC 204508 / S288c) (Baker's yeast), this protein is Trehalose-phosphatase.